Here is a 149-residue protein sequence, read N- to C-terminus: Small ribosomal subunit protein uS13 (149 aa).

A disordered region spans residues 118–149 (GRRHELGLPVRGQRTKSTFRKGSSVGVRRKKR).

The protein belongs to the universal ribosomal protein uS13 family. Part of the 30S ribosomal subunit. Forms a loose heterodimer with protein S19. Forms two bridges to the 50S subunit in the 70S ribosome.

Functionally, located at the top of the head of the 30S subunit, it contacts several helices of the 16S rRNA. In the 70S ribosome it contacts the 23S rRNA (bridge B1a) and protein L5 of the 50S subunit (bridge B1b), connecting the 2 subunits; these bridges are implicated in subunit movement. The chain is Small ribosomal subunit protein uS13 from Methanothermobacter thermautotrophicus (strain ATCC 29096 / DSM 1053 / JCM 10044 / NBRC 100330 / Delta H) (Methanobacterium thermoautotrophicum).